Here is a 409-residue protein sequence, read N- to C-terminus: Bone morphogenetic protein 4 (409 aa).

Residues Met1–Gly19 form the signal peptide. The propeptide occupies Gly20–Arg293. At Ser91 the chain carries Phosphoserine. The disordered stretch occupies residues Ser91 to Arg110. 4 N-linked (GlcNAc...) asparagine glycosylation sites follow: Asn144, Asn209, Asn351, and Asn366. 3 disulfides stabilise this stretch: Cys309/Cys374, Cys338/Cys406, and Cys342/Cys408.

Belongs to the TGF-beta family. As to quaternary structure, homodimer; disulfide-linked. Interacts with GREM2. Part of a complex consisting of TWSG1 and CHRD. Interacts with the serine proteases, HTRA1 and HTRA3; the interaction with either inhibits BMP4-mediated signaling. The HTRA protease activity is required for this inhibition. Interacts with SOSTDC1. Interacts with FBN1 (via N-terminal domain) and FBN2. Interacts with type I receptor BMPR1A. Interacts with type II receptor BMPR2. Interacts with FSTL1; this interaction inhibits the activation of the BMP4/Smad1/5/8 signaling pathway. Interacts with SCUBE3. Interacts with TGFBR3.

The protein localises to the secreted. The protein resides in the extracellular space. Its subcellular location is the extracellular matrix. Its function is as follows. Growth factor of the TGF-beta superfamily that plays essential roles in many developmental processes, including neurogenesis, vascular development, angiogenesis and osteogenesis. Acts in concert with PTHLH/PTHRP to stimulate ductal outgrowth during embryonic mammary development and to inhibit hair follicle induction. Initiates the canonical BMP signaling cascade by associating with type I receptor BMPR1A and type II receptor BMPR2. Once all three components are bound together in a complex at the cell surface, BMPR2 phosphorylates and activates BMPR1A. In turn, BMPR1A propagates signal by phosphorylating SMAD1/5/8 that travel to the nucleus and act as activators and repressors of transcription of target genes. Positively regulates the expression of odontogenic development regulator MSX1 via inducing the IPO7-mediated import of SMAD1 to the nucleus. Required for MSX1-mediated mesenchymal molar tooth bud development beyond the bud stage, via promoting Wnt signaling. Acts as a positive regulator of odontoblast differentiation during mesenchymal tooth germ formation, expression is repressed during the bell stage by MSX1-mediated inhibition of CTNNB1 signaling. Able to induce its own expression in dental mesenchymal cells and also in the neighboring dental epithelial cells via an MSX1-mediated pathway. Can also signal through non-canonical BMP pathways such as ERK/MAP kinase, PI3K/Akt, or SRC cascades. For example, induces SRC phosphorylation which, in turn, activates VEGFR2, leading to an angiogenic response. This Oryctolagus cuniculus (Rabbit) protein is Bone morphogenetic protein 4 (BMP4).